A 48-amino-acid polypeptide reads, in one-letter code: Delta-stichotoxin-She1a (48 aa).

Disulfide bonds link Cys3/Cys43, Cys5/Cys33, and Cys26/Cys44.

It belongs to the sea anemone sodium channel inhibitory toxin family. Type II subfamily.

It localises to the secreted. It is found in the nematocyst. Its function is as follows. Binds specifically to voltage-gated sodium channels (Nav), thereby delaying their inactivation during signal transduction. Is highly toxic to crabs (by intrahemocoelic injection), but without effect upon mice (by intraperitoneal injection). The chain is Delta-stichotoxin-She1a from Stichodactyla helianthus (Sun anemone).